We begin with the raw amino-acid sequence, 431 residues long: ETS domain-containing protein Elk-4 (431 aa).

The segment at residues 5–85 (ITLWQFLLQL…NGQKFVYKFV (81 aa)) is a DNA-binding region (ETS). The segment at 114–139 (SSSSKDVENGGKDKPPQPGAKTSSRN) is disordered. The segment covering 118 to 128 (KDVENGGKDKP) has biased composition (basic and acidic residues). A Glycyl lysine isopeptide (Lys-Gly) (interchain with G-Cter in SUMO2) cross-link involves residue Lys-167. Ser-180 bears the Phosphoserine mark. Disordered stretches follow at residues 251–282 (TTPP…DTDI), 294–323 (ENLS…KKPK), and 411–431 (TLSG…LQKT). The segment covering 261-273 (LQEPPRTPSPPLS) has biased composition (pro residues). A compositionally biased stretch (basic and acidic residues) spans 299-313 (EPKDQDSVLLEKDKV).

This sequence belongs to the ETS family. Interacts with SIRT7.

It localises to the nucleus. Functionally, involved in both transcriptional activation and repression. Interaction with SIRT7 leads to recruitment and stabilization of SIRT7 at promoters, followed by deacetylation of histone H3 at 'Lys-18' (H3K18Ac) and subsequent transcription repression. Forms a ternary complex with the serum response factor (SRF). Requires DNA-bound SRF for ternary complex formation and makes extensive DNA contacts to the 5'side of SRF, but does not bind DNA autonomously. The polypeptide is ETS domain-containing protein Elk-4 (ELK4) (Homo sapiens (Human)).